Here is a 165-residue protein sequence, read N- to C-terminus: MEPDAKSPTPGTTETPRELATADILRVMELLPHRYPFLLVDRIVEIDGDSSCIGIKNVTINEPQFTGHFPKVPVFPGVLLVEGMAQTAGAICCAHTLTRDTRPSRVYLMTIDKVKFRKPVVPGDTVEYHMRKLTNRRTMWWFRGEAKVAGTLVAEAEIGAMLVTE.

Residue His68 is part of the active site.

This sequence belongs to the thioester dehydratase family. FabZ subfamily.

The protein localises to the cytoplasm. The enzyme catalyses a (3R)-hydroxyacyl-[ACP] = a (2E)-enoyl-[ACP] + H2O. Involved in unsaturated fatty acids biosynthesis. Catalyzes the dehydration of short chain beta-hydroxyacyl-ACPs and long chain saturated and unsaturated beta-hydroxyacyl-ACPs. This is 3-hydroxyacyl-[acyl-carrier-protein] dehydratase FabZ from Methylobacterium sp. (strain 4-46).